Consider the following 280-residue polypeptide: Aquaporin PIP2-7 (280 aa).

At Met1 the chain carries N-acetylmethionine. Residues Met1–Arg38 are Cytoplasmic-facing. Residue Lys3 is modified to N6,N6-dimethyllysine. Residues Ala39–Ile59 traverse the membrane as a helical segment. Residues Gly60 to Asp69 lie on the Extracellular side of the membrane. Residues Gly70 to Cys90 traverse the membrane as a helical segment. Residues Thr91–Ala118 are Cytoplasmic-facing. The NPA 1 motif lies at Asn100–Ala102. The chain crosses the membrane as a helical span at residues Leu119–Phe139. At Met140–Lys160 the chain is on the extracellular side. A helical transmembrane segment spans residues Gly161–Ala181. Residues Thr182–His192 are Cytoplasmic-facing. Residues Ile193–Ile213 form a helical membrane-spanning segment. Residues Pro214–Trp242 lie on the Extracellular side of the membrane. The NPA 2 signature appears at Asn221–Ala223. Residues Ile243 to Leu263 form a helical membrane-spanning segment. Over Arg264–Asn280 the chain is Cytoplasmic. Ser273 and Ser276 each carry phosphoserine. Residue Thr279 is modified to Phosphothreonine.

It belongs to the MIP/aquaporin (TC 1.A.8) family. PIP (TC 1.A.8.11) subfamily. As to quaternary structure, interacts with SYP61 and SYP121 in trafficking vesicles and at the plasma membrane. Highly expressed in flowers, expressed at low levels in siliques, and at low level in leaves and roots. Highly levels in elongating cells in both roots and shoots.

It is found in the cell membrane. Its function is as follows. Water channel required to facilitate the transport of water across cell membrane. May be involved in the osmoregulation in plants under high osmotic stress such as under a high salt condition. This chain is Aquaporin PIP2-7, found in Arabidopsis thaliana (Mouse-ear cress).